The chain runs to 720 residues: DNA replication licensing factor mcm7-A (720 aa).

The segment at 183–210 (CDQCGAETYQPIQSPTFMPLIMCPSREC) adopts a C4-type zinc-finger fold. Positions 331 to 537 (FYEKLAASIA…NDLRLAQHIT (207 aa)) constitute an MCM domain. Y344, G383, A385, K386, S387, N488, R513, and R603 together coordinate ATP. Positions 512-515 (SRFD) match the Arginine finger motif.

Belongs to the MCM family. Component of the mcm2-7 complex (RLF-M). The complex forms a toroidal hexameric ring with the proposed subunit order mcm2-mcm6-mcm4-mcm7-mcm3-mcm5. The heterodimer of mmcm3/mcm5 interacts with mcm4, mmcm6, mcm7 and weakly with mcm2. The N-terminus is required for interaction with mmcm3, though this interaction may not be direct, and remains in a complex with mmcm3 throughout the cell cycle. Begins to associate with zmcm6 at the neurula stage. Component of the replisome complex. Component of the CMG helicase complex, composed of the mcm2-7 complex, the GINS complex and cdc45. Ubiquitinated by traip when forks converge following formation of DNA interstrand cross-links. Ubiquitinated via 'Lys-6'- and 'Lys-63'-linked polyubiquitination by traip. Short ubiquitin chains on mcm7 promote recruitment of DNA glycosylase neil3. If the interstrand cross-link cannot be cleaved by neil3, the ubiquitin chains continue to grow on mcm7, promoting the unloading of the CMG helicase complex by the vcp/p97 ATPase.

It is found in the nucleus. Its subcellular location is the chromosome. The catalysed reaction is ATP + H2O = ADP + phosphate + H(+). Functionally, acts as a component of the mcm2-7 complex (mcm complex) which is the putative replicative helicase essential for 'once per cell cycle' DNA replication initiation and elongation in eukaryotic cells. The active ATPase sites in the mcm2-7 ring are formed through the interaction surfaces of two neighboring subunits such that a critical structure of a conserved arginine finger motif is provided in trans relative to the ATP-binding site of the Walker A box of the adjacent subunit. The six ATPase active sites, however, are likely to contribute differentially to the complex helicase activity. The existence of maternal and zygotic forms of mcm3 and mcm6 suggests that specific forms of mcm2-7 complexes may be used during different stages of development. In Xenopus laevis (African clawed frog), this protein is DNA replication licensing factor mcm7-A (mcm7-a).